The sequence spans 308 residues: Glucan 1,3-beta-glucosidase BGL2 (308 aa).

The N-terminal stretch at 1-18 (MQIKFLTTLATVLTSVAA) is a signal peptide. The Proton donor role is filled by E119. N197 is a glycosylation site (N-linked (GlcNAc...) asparagine). Catalysis depends on E228, which acts as the Nucleophile.

This sequence belongs to the glycosyl hydrolase 17 family.

It localises to the secreted. It is found in the cell wall. Its subcellular location is the cytoplasm. The catalysed reaction is Successive hydrolysis of beta-D-glucose units from the non-reducing ends of (1-&gt;3)-beta-D-glucans, releasing alpha-glucose.. Cell wall glucan 1,3-beta-glucosidase involved in cell wall biosynthesis and virulence. Crucial for delivery of beta-1,3-glucan to the biofilm matrix and for accumulation of mature matrix biomass. Plays a role as a major antigen in human systemic candidiasis patients. The chain is Glucan 1,3-beta-glucosidase BGL2 (BGL2) from Candida albicans (strain SC5314 / ATCC MYA-2876) (Yeast).